Consider the following 311-residue polypeptide: Peptide methionine sulfoxide reductase MsrA/MsrB (311 aa).

The peptide methionine sulfoxide reductase A stretch occupies residues 1 to 155 (MAEIYLAGGC…PGGYCHINVN (155 aa)). The active site involves cysteine 10. The region spanning 172-295 (DAELKEQLTQ…NSAALRFIPK (124 aa)) is the MsrB domain. Cysteine 284 functions as the Nucleophile in the catalytic mechanism.

In the N-terminal section; belongs to the MsrA Met sulfoxide reductase family. It in the C-terminal section; belongs to the MsrB Met sulfoxide reductase family.

The enzyme catalyses L-methionyl-[protein] + [thioredoxin]-disulfide + H2O = L-methionyl-(S)-S-oxide-[protein] + [thioredoxin]-dithiol. It carries out the reaction [thioredoxin]-disulfide + L-methionine + H2O = L-methionine (S)-S-oxide + [thioredoxin]-dithiol. It catalyses the reaction L-methionyl-[protein] + [thioredoxin]-disulfide + H2O = L-methionyl-(R)-S-oxide-[protein] + [thioredoxin]-dithiol. Functionally, has an important function as a repair enzyme for proteins that have been inactivated by oxidation. Catalyzes the reversible oxidation-reduction of methionine sulfoxide in proteins to methionine. Involved in protection against oxidative stress when the bacterium enters the host bloodstream and required for maximal growth under aerobic and anaerobic conditions. In Streptococcus gordonii (strain Challis / ATCC 35105 / BCRC 15272 / CH1 / DL1 / V288), this protein is Peptide methionine sulfoxide reductase MsrA/MsrB (msrAB).